The following is a 185-amino-acid chain: Elongation factor P (185 aa).

This sequence belongs to the elongation factor P family.

The protein localises to the cytoplasm. It functions in the pathway protein biosynthesis; polypeptide chain elongation. Involved in peptide bond synthesis. Stimulates efficient translation and peptide-bond synthesis on native or reconstituted 70S ribosomes in vitro. Probably functions indirectly by altering the affinity of the ribosome for aminoacyl-tRNA, thus increasing their reactivity as acceptors for peptidyl transferase. The chain is Elongation factor P from Mesomycoplasma hyopneumoniae (strain 232) (Mycoplasma hyopneumoniae).